The chain runs to 258 residues: MVLIRVLANLLVLQLSYAQMSSELVVGGGECNRNRHRSLALLYNSSGTLCGGTLIHEEWVLSAAHCDMENMKIYLGLHNLSLPNKDQQKREPRETHFCLPSRNYTLWDKDIMLIKLNRPVNNSPHIAPISLPSNPPRLRSVCHIMGWGAITSPNETYPDVPHCANINILRYSVCRAAFGRLPAQSRTLCAGILRGGIDTCLGDSGGPLICNGQIQGIVSWGAEVCAKPHAPGLYTKVSDYTDWIQSIIAGNTTATCPP.

The N-terminal stretch at 1-18 is a signal peptide; it reads MVLIRVLANLLVLQLSYA. The Peptidase S1 domain maps to 25-249; sequence VVGGGECNRN…YTDWIQSIIA (225 aa). The N-linked (GlcNAc...) asparagine glycan is linked to Asn-44. A disulfide bridge connects residues Cys-50 and Cys-66. His-65 (charge relay system) is an active-site residue. N-linked (GlcNAc...) asparagine glycans are attached at residues Asn-79 and Asn-103. Asp-110 functions as the Charge relay system in the catalytic mechanism. 3 disulfides stabilise this stretch: Cys-142/Cys-210, Cys-174/Cys-189, and Cys-200/Cys-225. N-linked (GlcNAc...) asparagine glycosylation is present at Asn-154. Ser-204 acts as the Charge relay system in catalysis. Asn-251 carries an N-linked (GlcNAc...) asparagine glycan.

It belongs to the peptidase S1 family. Snake venom subfamily. In terms of assembly, monomer. In terms of tissue distribution, expressed by the venom gland.

Its subcellular location is the secreted. In terms of biological role, snake venom serine protease that may act in the hemostasis system of the prey. The polypeptide is Serine protease sp-Eoc49 (Echis ocellatus (Ocellated saw-scaled viper)).